We begin with the raw amino-acid sequence, 37 residues long: Cytochrome b6-f complex subunit 5 (37 aa).

The helical transmembrane segment at 5 to 25 (ILLGIVLGMVLVTLAGLFVAA) threads the bilayer.

This sequence belongs to the PetG family. In terms of assembly, the 4 large subunits of the cytochrome b6-f complex are cytochrome b6, subunit IV (17 kDa polypeptide, PetD), cytochrome f and the Rieske protein, while the 4 small subunits are PetG, PetL, PetM and PetN. The complex functions as a dimer.

It localises to the cellular thylakoid membrane. Functionally, component of the cytochrome b6-f complex, which mediates electron transfer between photosystem II (PSII) and photosystem I (PSI), cyclic electron flow around PSI, and state transitions. PetG is required for either the stability or assembly of the cytochrome b6-f complex. This Synechococcus sp. (strain JA-3-3Ab) (Cyanobacteria bacterium Yellowstone A-Prime) protein is Cytochrome b6-f complex subunit 5.